Reading from the N-terminus, the 493-residue chain is Protein translocase subunit SecY (493 aa).

Residues 1–21 (MDSVIRALQPYFERIPSVERP) lie on the Cytoplasmic side of the membrane. A helical membrane pass occupies residues 22-48 (KGHVHFREKFGWTAAILLLYFILSNVP). The Extracellular segment spans residues 49 to 59 (VFGLSPESIDI). An intramembrane region (helical) is located at residues 60–67 (FAAYRALF). A discontinuously helical transmembrane segment spans residues 60–88 (FAAYRALFAGSTGSIIALGIGPIVTASII). The stretch at 68-79 (AGSTGSIIALGI) is an intramembrane region. The segment at residues 80–88 (GPIVTASII) is an intramembrane region (helical). Topologically, residues 89–109 (LQLLVGAGIIKLDLTNPEDRA) are cytoplasmic. The chain crosses the membrane as a helical span at residues 110–134 (AYQDFQRFLVFVMIAVEAIPQIAGG). Topologically, residues 135–151 (LLKPDLNLAAQLGVSPG) are extracellular. Residues 152–176 (IISFLIFIQLFIGGVLIVYMDEVVS) traverse the membrane as a helical segment. Over 177 to 182 (KWGIGS) the chain is Cytoplasmic. The chain crosses the membrane as a helical span at residues 183-201 (GVSLFILAGIAQSIVVGLF). The Extracellular segment spans residues 202 to 244 (NWVIPPNSAMPAGIIPRWIWIAQNYPLDQLFTGSGLAFLLIQG). Residues 245–266 (GILALITTAAIILLVVFFEGTR) form a helical membrane-spanning segment. Over 267–291 (VEIPLAHAVARGARGRFPIKLIYAS) the chain is Cytoplasmic. A helical transmembrane segment spans residues 292–313 (VLPMIFVRALQANVVALGQVLH). The Extracellular segment spans residues 314–367 (ARGVTIFGEFVNGKAVSGLMFFLQPVSSPYDWIPSLVKSQGAAFAAIPDWMIYL). Residues 368-387 (HLLIDALILVVGGIIFAWFW) form a helical membrane-spanning segment. Topologically, residues 388-430 (VETSGMDARTVASQIAKSGMQVPGFRKSPQVLERVLSRYIPKV) are cytoplasmic. The helical transmembrane segment at 431–449 (TILGGAIIGILTLVANMLG) threads the bilayer. Residues 450–454 (TIGNV) lie on the Extracellular side of the membrane. The chain crosses the membrane as a helical span at residues 455–469 (SGTGLLLAVSIAYRF). Residues 470-493 (YEDLAKEQLTEMHPLIRRMLGEEA) are Cytoplasmic-facing.

It belongs to the SecY/SEC61-alpha family. As to quaternary structure, component of the Sec protein translocase complex. Heterotrimer consisting of alpha (SecY), beta (SecG) and gamma (SecE) subunits. The heterotrimers can form oligomers, although 1 heterotrimer is thought to be able to translocate proteins. Interacts with the ribosome. May interact with SecDF, and other proteins may be involved.

The protein resides in the cell membrane. In terms of biological role, the central subunit of the protein translocation channel SecYEG. Consists of two halves formed by TMs 1-5 and 6-10. These two domains form a lateral gate at the front which open onto the bilayer between TMs 2 and 7, and are clamped together by SecE at the back. The channel is closed by both a pore ring composed of hydrophobic SecY resides and a short helix (helix 2A) on the extracellular side of the membrane which forms a plug. The plug probably moves laterally to allow the channel to open. The ring and the pore may move independently. This Archaeoglobus fulgidus (strain ATCC 49558 / DSM 4304 / JCM 9628 / NBRC 100126 / VC-16) protein is Protein translocase subunit SecY.